The chain runs to 372 residues: NAD(P)H-quinone oxidoreductase subunit 1 (372 aa).

8 helical membrane-spanning segments follow: residues 27–47 (IIWLPLPMLLVLVAAVVGVLV), 97–117 (ILFTAGPILVLVPVILSWLIV), 128–148 (VGIGIFLWIALSSIQPIGLLM), 176–196 (LALSVLAIVLMTNSLSTIDIV), 204–224 (ILSWNIWRQPVGFIVFWICAL), 266–286 (ILSALLVSILYLGGWGFPIPV), 308–328 (SIGIVMTVLKAYLLVFIAILL), and 347–367 (FLLPISLANLLITAGLKLAFP).

The protein belongs to the complex I subunit 1 family. NDH-1 is composed of at least 11 different subunits.

It is found in the cellular thylakoid membrane. It carries out the reaction a plastoquinone + NADH + (n+1) H(+)(in) = a plastoquinol + NAD(+) + n H(+)(out). The catalysed reaction is a plastoquinone + NADPH + (n+1) H(+)(in) = a plastoquinol + NADP(+) + n H(+)(out). In terms of biological role, NDH-1 shuttles electrons from an unknown electron donor, via FMN and iron-sulfur (Fe-S) centers, to quinones in the respiratory and/or the photosynthetic chain. The immediate electron acceptor for the enzyme in this species is believed to be plastoquinone. Couples the redox reaction to proton translocation, and thus conserves the redox energy in a proton gradient. This chain is NAD(P)H-quinone oxidoreductase subunit 1, found in Prochlorococcus marinus (strain MIT 9215).